Reading from the N-terminus, the 285-residue chain is GTP-binding protein 8 (285 aa).

The region spanning 110–283 (QQPEVCFIGR…KCFIADITGS (174 aa)) is the EngB-type G domain. Residues 118-125 (GRSNVGKS), 147-151 (GHTKK), 165-168 (DMPG), 227-230 (TKID), and 262-264 (ISA) each bind GTP. The Mg(2+) site is built by serine 125 and threonine 149.

It belongs to the TRAFAC class TrmE-Era-EngA-EngB-Septin-like GTPase superfamily. EngB GTPase family. It depends on Mg(2+) as a cofactor.

This is GTP-binding protein 8 (Gtpbp8) from Mus musculus (Mouse).